We begin with the raw amino-acid sequence, 127 residues long: Insulin-like growth factor 3.L (127 aa).

A signal peptide spans 1 to 49 (MPVTAMCLQDSKKLKKAKLTRKKVTPFPFSRMVLCLSLVFTLYVEATNA). Positions 49-80 (ARCLRPRSKELLCGSELVDILQFICGPTGFYV) are b. Intrachain disulfides connect C61-C99, C73-C112, and C98-C103. Residues 81 to 92 (SKGASFRNRNRP) are c. The tract at residues 93–113 (GIVEECCFCGCSVAILESYCA) is a. The d stretch occupies residues 114–121 (APVTNFTG). A propeptide spans 122–127 (REEQKS) (e peptide).

The protein belongs to the insulin family.

The protein resides in the secreted. Functionally, the insulin-like growth factors, isolated from plasma, are structurally and functionally related to insulin but have a much higher growth-promoting activity. Promotes anterior neural development. The sequence is that of Insulin-like growth factor 3.L from Xenopus laevis (African clawed frog).